The chain runs to 263 residues: Troponin T, fast skeletal muscle isoforms (263 aa).

Acidic residues predominate over residues 1 to 26; that stretch reads MSDTEEVEHGEEEYEEEAHEAEEVHE. Disordered stretches follow at residues 1–66, 107–188, and 243–263; these read MSDT…FDDI, RAER…VLAE, and DQAQ…GRWK. N-acetylserine is present on Ser2. Composition is skewed to basic and acidic residues over residues 56–66, 107–149, and 177–188; these read PEGEKVDFDDI, RAER…DDLK, and TARETKKKVLAE. Residues 247–263 are compositionally biased toward basic residues; it reads KHSKKAGAKGKVGGRWK.

This sequence belongs to the troponin T family.

Its function is as follows. Troponin T is the tropomyosin-binding subunit of troponin, the thin filament regulatory complex which confers calcium-sensitivity to striated muscle actomyosin ATPase activity. The protein is Troponin T, fast skeletal muscle isoforms (TNNT3) of Gallus gallus (Chicken).